A 222-amino-acid polypeptide reads, in one-letter code: Disulfide bond formation protein D (222 aa).

The N-terminal stretch at 1-36 (MKKKQQSSAKFAVILTVVVVVLLAAIVIINNKTEQG) is a signal peptide. The Thioredoxin domain maps to 37 to 220 (NDAVSGQPSI…IKETIEKELK (184 aa)). Residues C69 and C72 are joined by a disulfide bond.

Belongs to the thioredoxin family. DsbA subfamily.

Its subcellular location is the cell membrane. The protein resides in the membrane raft. Its function is as follows. Required for the stabilization, possibly via formation of a disulfide bond, of the obligatory competence protein ComGC. May be required for the stability of secreted proteins with disulfide bonds. Not required for sporulation. This chain is Disulfide bond formation protein D (bdbD), found in Bacillus subtilis (strain 168).